Reading from the N-terminus, the 868-residue chain is uncharacterized protein (868 aa).

It localises to the cytoplasm. It is found in the nucleus. This is an uncharacterized protein from Schizosaccharomyces pombe (strain 972 / ATCC 24843) (Fission yeast).